The sequence spans 535 residues: CTP synthase (535 aa).

An amidoligase domain region spans residues 1 to 267 (MTKYIFVTGG…DQIVLDHFGV (267 aa)). Ser-13 contacts CTP. Ser-13 contributes to the UTP binding site. 14–19 (SLGKGI) provides a ligand contact to ATP. Tyr-54 is a binding site for L-glutamine. An ATP-binding site is contributed by Asp-71. The Mg(2+) site is built by Asp-71 and Glu-141. Residues 148-150 (DIE), 188-193 (KTKPTQ), and Lys-224 contribute to the CTP site. Residues 188–193 (KTKPTQ) and Lys-224 each bind UTP. The Glutamine amidotransferase type-1 domain occupies 292-535 (KIALVGKYVA…VAAASREVKD (244 aa)). L-glutamine is bound at residue Gly-354. Residue Cys-381 is the Nucleophile; for glutamine hydrolysis of the active site. Residues 382–385 (LGMQ), Glu-405, and Arg-463 contribute to the L-glutamine site. Residues His-508 and Glu-510 contribute to the active site.

The protein belongs to the CTP synthase family. As to quaternary structure, homotetramer.

The catalysed reaction is UTP + L-glutamine + ATP + H2O = CTP + L-glutamate + ADP + phosphate + 2 H(+). The enzyme catalyses L-glutamine + H2O = L-glutamate + NH4(+). It catalyses the reaction UTP + NH4(+) + ATP = CTP + ADP + phosphate + 2 H(+). It functions in the pathway pyrimidine metabolism; CTP biosynthesis via de novo pathway; CTP from UDP: step 2/2. Allosterically activated by GTP, when glutamine is the substrate; GTP has no effect on the reaction when ammonia is the substrate. The allosteric effector GTP functions by stabilizing the protein conformation that binds the tetrahedral intermediate(s) formed during glutamine hydrolysis. Inhibited by the product CTP, via allosteric rather than competitive inhibition. In terms of biological role, catalyzes the ATP-dependent amination of UTP to CTP with either L-glutamine or ammonia as the source of nitrogen. Regulates intracellular CTP levels through interactions with the four ribonucleotide triphosphates. The protein is CTP synthase of Levilactobacillus brevis (strain ATCC 367 / BCRC 12310 / CIP 105137 / JCM 1170 / LMG 11437 / NCIMB 947 / NCTC 947) (Lactobacillus brevis).